A 387-amino-acid chain; its full sequence is Protein adenylyltransferase VopS (387 aa).

Residues 76 to 77 (IT), 122 to 124 (LDS), 353 to 355 (GNG), and Arg359 contribute to the ATP site. The Fido domain occupies 278–387 (LNMDNLKELH…NAENSLHGIK (110 aa)).

It localises to the secreted. It catalyses the reaction L-tyrosyl-[protein] + ATP = O-(5'-adenylyl)-L-tyrosyl-[protein] + diphosphate. The catalysed reaction is L-threonyl-[protein] + ATP = 3-O-(5'-adenylyl)-L-threonyl-[protein] + diphosphate. In terms of biological role, adenylyltransferase involved in virulence by mediating the addition of adenosine 5'-monophosphate (AMP) to specific threonine residue of host Rho GTPases RhoA, Rac and Cdc42. The resulting AMPylation prevents the interaction of Rho GTPases with downstream effectors, thereby inhibiting actin assembly in infected cells. The polypeptide is Protein adenylyltransferase VopS (vopS) (Vibrio parahaemolyticus serotype O3:K6 (strain RIMD 2210633)).